A 454-amino-acid chain; its full sequence is Phosphoglucosamine mutase (454 aa).

The Phosphoserine intermediate role is filled by serine 102. Mg(2+)-binding residues include serine 102, aspartate 247, aspartate 249, and aspartate 251. Position 102 is a phosphoserine (serine 102).

The protein belongs to the phosphohexose mutase family. Requires Mg(2+) as cofactor. In terms of processing, activated by phosphorylation.

The catalysed reaction is alpha-D-glucosamine 1-phosphate = D-glucosamine 6-phosphate. Its function is as follows. Catalyzes the conversion of glucosamine-6-phosphate to glucosamine-1-phosphate. This chain is Phosphoglucosamine mutase, found in Kineococcus radiotolerans (strain ATCC BAA-149 / DSM 14245 / SRS30216).